We begin with the raw amino-acid sequence, 253 residues long: Non-homologous end joining protein Ku (253 aa).

A Ku domain is found at 9 to 192; the sequence is ISFGLVNIPV…EITEEELELA (184 aa).

The protein belongs to the prokaryotic Ku family. Homodimer. Interacts with LigD.

In terms of biological role, with LigD forms a non-homologous end joining (NHEJ) DNA repair enzyme, which repairs dsDNA breaks with reduced fidelity. Binds linear dsDNA with 5'- and 3'- overhangs but not closed circular dsDNA nor ssDNA. Recruits and stimulates the ligase activity of LigD. This is Non-homologous end joining protein Ku from Archaeoglobus fulgidus (strain ATCC 49558 / DSM 4304 / JCM 9628 / NBRC 100126 / VC-16).